The chain runs to 602 residues: Aspartate--tRNA(Asp/Asn) ligase (602 aa).

Glu-176 contacts L-aspartate. The aspartate stretch occupies residues 200–203 (QQFK). L-aspartate-binding residues include Arg-222 and His-452. 222-224 (RDE) lines the ATP pocket. Glu-490 lines the ATP pocket. Arg-497 lines the L-aspartate pocket. Position 542–545 (542–545 (GIDR)) interacts with ATP.

This sequence belongs to the class-II aminoacyl-tRNA synthetase family. Type 1 subfamily. In terms of assembly, homodimer.

Its subcellular location is the cytoplasm. It carries out the reaction tRNA(Asx) + L-aspartate + ATP = L-aspartyl-tRNA(Asx) + AMP + diphosphate. Aspartyl-tRNA synthetase with relaxed tRNA specificity since it is able to aspartylate not only its cognate tRNA(Asp) but also tRNA(Asn). Reaction proceeds in two steps: L-aspartate is first activated by ATP to form Asp-AMP and then transferred to the acceptor end of tRNA(Asp/Asn). The protein is Aspartate--tRNA(Asp/Asn) ligase of Rickettsia akari (strain Hartford).